Here is an 889-residue protein sequence, read N- to C-terminus: DNA mismatch repair protein MutS (889 aa).

622-629 (GPNMAGKS) lines the ATP pocket. A disordered region spans residues 869–889 (QRVKRPEKAPADVTAETEDQE).

The protein belongs to the DNA mismatch repair MutS family.

Its function is as follows. This protein is involved in the repair of mismatches in DNA. It is possible that it carries out the mismatch recognition step. This protein has a weak ATPase activity. This is DNA mismatch repair protein MutS from Desulfatibacillum aliphaticivorans.